The primary structure comprises 288 residues: Homeobox protein Hox-B4a (288 aa).

Residues 10-136 are disordered; that stretch reads SNYVDPKFPP…ASSPASTRKD (127 aa). Positions 118–132 are enriched in polar residues; sequence CGQTPHSQGASSPAS. The Antp-type hexapeptide signature appears at 139 to 144; the sequence is VYPWMK. The segment at residues 160 to 219 is a DNA-binding region (homeobox); sequence PKRSRTAYTRQQVLELEKEFHYNRYLTRRRRVEIAHTLCLSERQIKIWFQNRRMKWKKDH.

This sequence belongs to the Antp homeobox family. Deformed subfamily.

The protein resides in the nucleus. Functionally, sequence-specific transcription factor which is part of a developmental regulatory system that provides cells with specific positional identities on the anterior-posterior axis. The protein is Homeobox protein Hox-B4a (hoxb4a) of Takifugu rubripes (Japanese pufferfish).